A 301-amino-acid chain; its full sequence is GTP cyclohydrolase FolE2 (301 aa).

This sequence belongs to the GTP cyclohydrolase IV family.

The enzyme catalyses GTP + H2O = 7,8-dihydroneopterin 3'-triphosphate + formate + H(+). The protein operates within cofactor biosynthesis; 7,8-dihydroneopterin triphosphate biosynthesis; 7,8-dihydroneopterin triphosphate from GTP: step 1/1. Its function is as follows. Converts GTP to 7,8-dihydroneopterin triphosphate. The protein is GTP cyclohydrolase FolE2 of Pseudomonas syringae pv. tomato (strain ATCC BAA-871 / DC3000).